The following is an 817-amino-acid chain: Probable inorganic carbon transporter subunit DabA (817 aa).

Zn(2+) contacts are provided by C301, D303, H491, and C506. 2 disordered regions span residues 598–617 and 794–817; these read NTSVDEGRPAAAVRETERRA and GWHARPAPDASTATKAPASAGVPS.

The protein belongs to the inorganic carbon transporter (TC 9.A.2) DabA family. As to quaternary structure, forms a complex with DabB. Requires Zn(2+) as cofactor.

Its subcellular location is the cell inner membrane. Part of an energy-coupled inorganic carbon pump. In Salinibacter ruber (strain DSM 13855 / M31), this protein is Probable inorganic carbon transporter subunit DabA.